Reading from the N-terminus, the 92-residue chain is N(2)-fixation sustaining protein CowN (92 aa).

Belongs to the CowN family.

Is required to sustain N(2)-dependent growth in the presence of low levels of carbon monoxide (CO). Probably acts by protecting the N(2) fixation ability of the nitrogenase complex, which is inactivated in the presence of CO. This Rhodopseudomonas palustris (strain BisA53) protein is N(2)-fixation sustaining protein CowN.